Reading from the N-terminus, the 740-residue chain is Alpha-1,6-mannosylglycoprotein 6-beta-N-acetylglucosaminyltransferase A (740 aa).

At Met-1–Lys-13 the chain is on the cytoplasmic side. The helical; Signal-anchor for type II membrane protein transmembrane segment at Leu-14–Leu-30 threads the bilayer. At His-31 to Leu-740 the chain is on the lumenal side. Asn-109, Asn-114, and Asn-117 each carry an N-linked (GlcNAc...) asparagine glycan. Disulfide bonds link Cys-144–Cys-182, Cys-155–Cys-195, Cys-171–Cys-337, Cys-371–Cys-625, Cys-648–Cys-723, Cys-652–Cys-725, Cys-659–Cys-712, Cys-680–Cys-701, and Cys-736–Cys-739. The sufficient for catalytic activity stretch occupies residues Asn-212–Leu-740. Asn-333 carries N-linked (GlcNAc...) asparagine glycosylation. Substrate is bound at residue Asp-377–Ser-378. Residues Asn-432 and Asn-446 are each glycosylated (N-linked (GlcNAc...) asparagine). Glu-525 is a UDP-N-acetyl-alpha-D-glucosamine binding site. Lys-553 serves as a coordination point for substrate.

The protein belongs to the glycosyltransferase 18 family. In terms of processing, N-glycosylated. A secreted form is released from the membrane after cleavage by gamma-secretase.

It is found in the golgi apparatus membrane. It localises to the secreted. The enzyme catalyses N(4)-{beta-D-GlcNAc-(1-&gt;2)-[beta-D-GlcNAc-(1-&gt;4)]-alpha-D-Man-(1-&gt;3)-[beta-D-GlcNAc-(1-&gt;2)-alpha-D-Man-(1-&gt;6)]-beta-D-Man-(1-&gt;4)-beta-D-GlcNAc-(1-&gt;4)-beta-D-GlcNAc}-L-asparaginyl-[protein] + UDP-N-acetyl-alpha-D-glucosamine = N(4)-{beta-D-GlcNAc-(1-&gt;2)-[beta-D-GlcNAc-(1-&gt;4)]-alpha-D-Man-(1-&gt;3)-[beta-D-GlcNAc-(1-&gt;2)-[beta-D-GlcNAc-(1-&gt;6)]-alpha-D-Man-(1-&gt;6)]-beta-D-Man-(1-&gt;4)-beta-D-GlcNAc-(1-&gt;4)-beta-D-GlcNAc}-L-asparaginyl-[protein] + UDP + H(+). It participates in protein modification; protein glycosylation. Functionally, catalyzes the addition of N-acetylglucosamine (GlcNAc) in beta 1-6 linkage to the alpha-linked mannose of biantennary N-linked oligosaccharides. Catalyzes an important step in the biosynthesis of branched, complex-type N-glycans, such as those found on EGFR, TGFR (TGF-beta receptor) and CDH2. Via its role in the biosynthesis of complex N-glycans, plays an important role in the activation of cellular signaling pathways, reorganization of the actin cytoskeleton, cell-cell adhesion and cell migration. MGAT5-dependent EGFR N-glycosylation enhances the interaction between EGFR and LGALS3 and thereby prevents rapid EGFR endocytosis and prolongs EGFR signaling. Required for efficient interaction between TGFB1 and its receptor. Enhances activation of intracellular signaling pathways by several types of growth factors, including FGF2, PDGF, IGF, TGFB1 and EGF. MGAT5-dependent CDH2 N-glycosylation inhibits CDH2-mediated homotypic cell-cell adhesion and contributes to the regulation of downstream signaling pathways. Promotes cell migration. Contributes to the regulation of the inflammatory response. MGAT5-dependent TCR N-glycosylation enhances the interaction between TCR and LGALS3, limits agonist-induced TCR clustering, and thereby dampens TCR-mediated responses to antigens. Required for normal leukocyte evasation and accumulation at sites of inflammation. Inhibits attachment of monocytes to the vascular endothelium and subsequent monocyte diapedesis. Promotes proliferation of umbilical vein endothelial cells and angiogenesis, at least in part by promoting the release of the growth factor FGF2 from the extracellular matrix. The sequence is that of Alpha-1,6-mannosylglycoprotein 6-beta-N-acetylglucosaminyltransferase A (MGAT5) from Cricetulus griseus (Chinese hamster).